We begin with the raw amino-acid sequence, 142 residues long: Small heat shock protein IbpB (142 aa).

In terms of domain architecture, sHSP spans 26 to 137; that stretch reads AGESQSFPPY…AAQRIAISER (112 aa).

It belongs to the small heat shock protein (HSP20) family. Homodimer. Forms homomultimers of about 100-150 subunits at optimal growth temperatures. Conformation changes to oligomers at high temperatures or high ionic concentrations. The decrease in size of the multimers is accompanied by an increase in chaperone activity.

Its subcellular location is the cytoplasm. Its function is as follows. Associates with aggregated proteins, together with IbpA, to stabilize and protect them from irreversible denaturation and extensive proteolysis during heat shock and oxidative stress. Aggregated proteins bound to the IbpAB complex are more efficiently refolded and reactivated by the ATP-dependent chaperone systems ClpB and DnaK/DnaJ/GrpE. Its activity is ATP-independent. The polypeptide is Small heat shock protein IbpB (Shigella flexneri serotype 5b (strain 8401)).